The following is a 488-amino-acid chain: Coagulation factor X (488 aa).

The first 31 residues, Met1 to Ala31, serve as a signal peptide directing secretion. Positions Asn32 to Arg40 are excised as a propeptide. One can recognise a Gla domain in the interval Ala41 to Lys85. Residues Glu46, Glu47, Glu54, Glu56, Glu59, Glu60, Glu65, Glu66, Glu69, Glu72, and Glu79 each carry the 4-carboxyglutamate modification. Cysteines 57 and 62 form a disulfide. Residues Asp86–Glu122 enclose the EGF-like 1; calcium-binding domain. 11 disulfide bridges follow: Cys90–Cys101, Cys95–Cys110, Cys112–Cys121, Cys129–Cys140, Cys136–Cys149, Cys151–Cys164, Cys172–Cys342, Cys241–Cys246, Cys261–Cys277, Cys390–Cys404, and Cys415–Cys443. Position 103 is a (3R)-3-hydroxyaspartate (Asp103). The EGF-like 2 domain occupies Thr125–Ile165. The O-glycosylated at one site stretch occupies residues Ser183 to Tyr203. Positions Ser183 to Arg234 are cleaved as a propeptide — activation peptide. Thr199 and Thr211 each carry an O-linked (GalNAc...) threonine glycan. N-linked (GlcNAc...) asparagine glycosylation is found at Asn221 and Asn231. The Peptidase S1 domain maps to Ile235 to Lys467. Catalysis depends on charge relay system residues His276 and Asp322. Ser419 functions as the Charge relay system in the catalytic mechanism. Residues Ser476–Ser485 form an O-glycosylated at one site region.

It belongs to the peptidase S1 family. In terms of assembly, the two chains are formed from a single-chain precursor by the excision of two Arg residues and are held together by 1 or more disulfide bonds. Forms a heterodimer with SERPINA5. Interacts (inactive and activated) with ixolaris, an anticoagulant protein from Ixodes scapularis saliva. Interacts (activated) with iripin-8, a serine protease inhibitor from Ixodes ricinus saliva. Interacts (activated) with FXa-directed anticoagulant from Aedes albopictus saliva. Interacts (activated) with guianensin, an anticoagulant protein from Simulium guianense saliva. Interacts (activated) with simukunin, an anticoagulant protein from Simulium vittatum saliva. The vitamin K-dependent, enzymatic carboxylation of some glutamate residues allows the modified protein to bind calcium. Post-translationally, N- and O-glycosylated. O-glycosylated with core 1 or possibly core 8 glycans. In terms of processing, proteolytically cleaved and activated by cathepsin CTSG. The activation peptide is cleaved by factor IXa (in the intrinsic pathway), or by factor VIIa (in the extrinsic pathway). The iron and 2-oxoglutarate dependent 3-hydroxylation of aspartate and asparagine is (R) stereospecific within EGF domains. Plasma; synthesized in the liver.

It is found in the secreted. It catalyses the reaction Selective cleavage of Arg-|-Thr and then Arg-|-Ile bonds in prothrombin to form thrombin.. With respect to regulation, inhibited by SERPINA5 and SERPINA10. Its function is as follows. Factor Xa is a vitamin K-dependent glycoprotein that converts prothrombin to thrombin in the presence of factor Va, calcium and phospholipid during blood clotting. Factor Xa activates pro-inflammatory signaling pathways in a protease-activated receptor (PAR)-dependent manner. Up-regulates expression of protease-activated receptors (PARs) F2R, F2RL1 and F2RL2 in dermal microvascular endothelial cells. Triggers the production of pro-inflammatory cytokines, such as MCP-1/CCL2 and IL6, in cardiac fibroblasts and umbilical vein endothelial cells in PAR-1/F2R-dependent manner. Triggers the production of pro-inflammatory cytokines, such as MCP-1/CCL2, IL6, TNF-alpha/TNF, IL-1beta/IL1B, IL8/CXCL8 and IL18, in endothelial cells and atrial tissues. Induces expression of adhesion molecules, such as ICAM1, VCAM1 and SELE, in endothelial cells and atrial tissues. Increases expression of phosphorylated ERK1/2 in dermal microvascular endothelial cells and atrial tissues. Triggers activation of the transcription factor NF-kappa-B in dermal microvascular endothelial cells and atrial tissues. Activates pro-inflammatory and pro-fibrotic responses in dermal fibroblasts and enhances wound healing probably via PAR-2/F2RL1-dependent mechanism. Activates barrier protective signaling responses in endothelial cells in PAR-2/F2RL1-dependent manner; the activity depends on the cleavage of PAR-2/F2RL1 by factor Xa. Up-regulates expression of plasminogen activator inhibitor 1 (SERPINE1) in atrial tissues. This is Coagulation factor X (F10) from Homo sapiens (Human).